The primary structure comprises 232 residues: tRNA (guanine-N(1)-)-methyltransferase (232 aa).

S-adenosyl-L-methionine contacts are provided by residues G112 and 132–137 (IGDYVL).

This sequence belongs to the RNA methyltransferase TrmD family. Homodimer.

It is found in the cytoplasm. It catalyses the reaction guanosine(37) in tRNA + S-adenosyl-L-methionine = N(1)-methylguanosine(37) in tRNA + S-adenosyl-L-homocysteine + H(+). Specifically methylates guanosine-37 in various tRNAs. This chain is tRNA (guanine-N(1)-)-methyltransferase, found in Anaplasma phagocytophilum (strain HZ).